Consider the following 125-residue polypeptide: Fluoride-specific ion channel FluC (125 aa).

4 helical membrane-spanning segments follow: residues 1–21 (MIQA…RYYV), 32–52 (AFPW…GVFA), 68–88 (LLIT…LDAI), and 101–121 (IYIA…LAVM). Residues Gly75 and Thr78 each contribute to the Na(+) site.

This sequence belongs to the fluoride channel Fluc/FEX (TC 1.A.43) family.

It localises to the cell inner membrane. It carries out the reaction fluoride(in) = fluoride(out). Na(+) is not transported, but it plays an essential structural role and its presence is essential for fluoride channel function. Its function is as follows. Fluoride-specific ion channel. Important for reducing fluoride concentration in the cell, thus reducing its toxicity. The polypeptide is Fluoride-specific ion channel FluC (Rhizobium johnstonii (strain DSM 114642 / LMG 32736 / 3841) (Rhizobium leguminosarum bv. viciae)).